The chain runs to 66 residues: Large ribosomal subunit protein bL35 (66 aa).

Residues 1–15 (MSKMKTKSGAKKRFK) are compositionally biased toward basic residues. Residues 1–35 (MSKMKTKSGAKKRFKLTASGKVKAGQAGKRHGMIK) are disordered.

Belongs to the bacterial ribosomal protein bL35 family.

In Maricaulis maris (strain MCS10) (Caulobacter maris), this protein is Large ribosomal subunit protein bL35.